The sequence spans 430 residues: Cyclin-A2 (430 aa).

Residue M1 is modified to N-acetylmethionine. Disordered regions lie at residues 1–80 and 106–129; these read MLGS…PIND and EEIQKRPTESKKSESEDVLAFNSA. S5 carries the phosphoserine modification. The segment covering 107–120 has biased composition (basic and acidic residues); it reads EIQKRPTESKKSES.

It belongs to the cyclin family. Cyclin AB subfamily. Interacts with the CDK1 and CDK2 protein kinases to form serine/threonine kinase holoenzyme complexes. Interacts with CDK1 (hyperphosphorylated form in G1 and underphosphorylated forms in S and G2). Interacts with CDK2; the interaction increases from G1 to G2. Interacts (associated with CDK2 but not with CDK1) with SCAPER; regulates the activity of CCNA2/CDK2 by transiently maintaining CCNA2 in the cytoplasm. Forms a ternary complex with CDK2 and CDKN1B; CDKN1B inhibits the kinase activity of CDK2 through conformational rearrangements. Interacts with INCA1. Polyubiquitinated via 'Lys-11'-linked ubiquitin by the anaphase-promoting complex (APC/C), leading to its degradation by the proteasome. Deubiquitinated and stabilized by USP37 enables entry into S phase. Ubiquitinated during the G1 phase by the SCF(FBXO31) complex, leading to its proteasomal degradation.

The protein localises to the nucleus. It localises to the cytoplasm. In terms of biological role, cyclin which controls both the G1/S and the G2/M transition phases of the cell cycle. Functions through the formation of specific serine/threonine kinase holoenzyme complexes with the cyclin-dependent protein kinases CDK1 and CDK2. The cyclin subunit confers the substrate specificity of these complexes and differentially interacts with and activates CDK1 and CDK2 throughout the cell cycle. The chain is Cyclin-A2 from Bos taurus (Bovine).